The primary structure comprises 184 residues: Large ribosomal subunit protein uL5 (184 aa).

This sequence belongs to the universal ribosomal protein uL5 family. As to quaternary structure, part of the 50S ribosomal subunit; part of the 5S rRNA/L5/L18/L25 subcomplex. Contacts the 5S rRNA and the P site tRNA. Forms a bridge to the 30S subunit in the 70S ribosome.

This is one of the proteins that bind and probably mediate the attachment of the 5S RNA into the large ribosomal subunit, where it forms part of the central protuberance. In the 70S ribosome it contacts protein S13 of the 30S subunit (bridge B1b), connecting the 2 subunits; this bridge is implicated in subunit movement. Contacts the P site tRNA; the 5S rRNA and some of its associated proteins might help stabilize positioning of ribosome-bound tRNAs. In Agrobacterium fabrum (strain C58 / ATCC 33970) (Agrobacterium tumefaciens (strain C58)), this protein is Large ribosomal subunit protein uL5.